The primary structure comprises 299 residues: NAD kinase (299 aa).

Asp71 (proton acceptor) is an active-site residue. NAD(+) contacts are provided by residues 71 to 72, 145 to 146, Arg173, Asp175, 186 to 191, Ala210, and Gln248; these read DG, ND, and TAYALS.

This sequence belongs to the NAD kinase family. Requires a divalent metal cation as cofactor.

Its subcellular location is the cytoplasm. The catalysed reaction is NAD(+) + ATP = ADP + NADP(+) + H(+). In terms of biological role, involved in the regulation of the intracellular balance of NAD and NADP, and is a key enzyme in the biosynthesis of NADP. Catalyzes specifically the phosphorylation on 2'-hydroxyl of the adenosine moiety of NAD to yield NADP. The polypeptide is NAD kinase (Bordetella avium (strain 197N)).